We begin with the raw amino-acid sequence, 210 residues long: Mediator of RNA polymerase II transcription subunit 20 (210 aa).

The protein belongs to the Mediator complex subunit 20 family. In terms of assembly, component of the Mediator complex, which is composed of at least 21 subunits that form three structurally distinct submodules. The Mediator head module contains MED6, MED8, MED11, SRB4/MED17, SRB5/MED18, ROX3/MED19, SRB2/MED20 and SRB6/MED22, the middle module contains MED1, MED4, NUT1/MED5, MED7, CSE2/MED9, NUT2/MED10, SRB7/MED21 and SOH1/MED31, and the tail module contains MED2, PGD1/MED3, RGR1/MED14, GAL11/MED15 and SIN4/MED16. The head and the middle modules interact directly with RNA polymerase II, whereas the elongated tail module interacts with gene-specific regulatory proteins. MED1 interacts directly with MED4 and MED7. SRB2/MED20 interacts directly with SRB4/MED17 and SRB5/MED18.

It localises to the nucleus. In terms of biological role, component of the Mediator complex, a coactivator involved in the regulated transcription of nearly all RNA polymerase II-dependent genes. Mediator functions as a bridge to convey information from gene-specific regulatory proteins to the basal RNA polymerase II transcription machinery. The Mediator complex, having a compact conformation in its free form, is recruited to promoters by direct interactions with regulatory proteins and serves for the assembly of a functional preinitiation complex with RNA polymerase II and the general transcription factors. The Mediator complex unfolds to an extended conformation and partially surrounds RNA polymerase II, specifically interacting with the unphosphorylated form of the C-terminal domain (CTD) of RNA polymerase II. The Mediator complex dissociates from the RNA polymerase II holoenzyme and stays at the promoter when transcriptional elongation begins. This is Mediator of RNA polymerase II transcription subunit 20 (SRB2) from Saccharomyces cerevisiae (strain ATCC 204508 / S288c) (Baker's yeast).